Here is a 2571-residue protein sequence, read N- to C-terminus: MAEPRTLLLLCVLVLCLSDSSFIRGQTVRSKRCDIHTKFVTHTPCTACAAIRRQLCPWGWSRNFPEKILLDCRYELQLRGAAISLSGCSQECWKDVVQKACCPGYWGSQCFECPGGPATPCSGHGTCLDGIEGNGTCVCQGNFSGSVCQECRDPNRFGPDCQSVCNCVHGVCSHGPRGDGSCRCFAGYTGPHCDQELPVCQSLKCPQNSQCSAEAPTCKCLPGYTQQDNVCLAPDPCQPSACSPLARCSVTPQGQAQCQCPENYHGDGKVCLPRDPCLTNFGGCPSNSTFCLYRGPGKATCMCRPGMTSINNNASEGCHVSCKPHSCDRSATCQVTPDRKTSCVCKNDEVGDGHACYGHLLHEVRRANQNGLVFLRLRAAIAMLEQGCQEILTTSGPFTVLVPSMFSVSSVSSNMNATLAQQLCRQHVIAGEHMLENAGPPSTRRWWTLAGQEVTITFKNMRYAYKYEDQPQQFSIHKANYIAANGVFHTVTALRWQLPPPLPGDSKKTVGQILASTEVFTRFETILENCGLPSILDGPGPFTVFAPSNEAVDSLRDGRLIYLFTAGLSKLQELVRYHIYNHGQLTVEKLISKGRVLTMANQVLTVNISEGGRILLGPGGIPVRRVDVPAANGVIHMLEGILLPPTILPILPKHCDEEQHQTVLGSCVDCQALNTSVCPPNSVKMDIFPKECVYIHDPNGLNVLKKGCADYCNQTITKRGCCKGFFGPDCTQCPGGFSNPCYGKGNCSDGVRGNGACLCFPDYKGIACHICSDPKKHGEQCQEDCGCVHGLCDNRPGSGGVCQQGTCAPGFQGRFCNESMGNCGSTGLAQPCHSDAHCVIQEGVARCVCHDGFEGNGFSCKRSNPCSRPDRGGCSENAECVPGDLGTHHCICHKGWSGDGRICVAIDECGLDTRGGCHADALCSYVGPGQSRCTCKLGFAGNGYECSPIDPCRVGNGGCHGLATCKAVGGGQRVCTCPPHFGGDGFSCYGDIIQELEANAHFSAFSQWFKNSSITLPADSRVTALVPSESAIRRLSLEDQAFWLQPKMLPELARAHFLQGAFSEEELARLNGQQVATLSATTRWQIHNISGKVWVQNATVDVPDLLATNGILHIVSQVLLPPRGDMQTGPGLLQQLDSVPAFRLFGEQLKHHKLVAQIEAAKAYTIFVPTNHSLETQGNNSVLGIDTVRHHVILGEALSVEVLRKGGHRNSLLGPAHWLVFYNHSGQPEVNHMPLEGPLLEAPGSSLFGLSGILAVGSSRCLHSHAEALREKCINCTRKFRCTQGFQLQDTPRKSCVYRSGLSFSRGCSYTCAKKIQVPDCCPGFFGTLCEPCPGGLGGVCSGHGQCQDRFLGNGECRCQEGFHGTACEMCELGRYGPTCSGVCDCDHGLCQEGLRGNGSCVCHAGWQGLRCDQKITDHQCPKKCDPNANCIQDSAGIPACVCAAGYSGNGSYCSEVDPCASGHGGCSPYANCTKVAPGQRTCTCQDGYTGDGELCQEINSCLVHNGGCHVHAECIPTGPQQVSCSCREGYSGDGIQTCKLLDPCSQNNGGCSPYAVCKSTGDGQRTCSCDATHTVGDGITCHGRVGLELLRNKYASFFSLHLLEYKELKGDGPFTVFVPHADLISNMSQDELARIRAHRQLVFRYHVVGCRKLWSQEMLDQGYITTLSGHTLRVSEREGSIYLNDFARVVSSDLEVVNGVLHFIDHVLLPPDVLHWESGAIPIPQRNVTAAAESFGYKIFSRLLTVAGLLPMLQDASHRPFTMLWPTDSALQALPPDRKNWLFHEDHRDKLAAILRGHMIRNIEALASDLPNLGQLRTMHGNTISFSCGLTRPGELIVGEDEAHIVQRHLTFEGGLAYGIDQLLEPPDLGARCDRFEPQPLQMKTCSICGLEPPCPRGSREQGSPETCWRHYSKFWTTPLHSISMRGAYWIPSSFWNRNHMSRGCHRNCVTTVWKPSCCPGHYGINCHACPGGPRSPCSDHGVCLDGIRGSGQCNCHPGFAGTACELCAPGAFGPQCQACRCTQHGRCDEGLGGSGSCFCDEGWTGARCEVQLELQPVCTPPCAPQAVCRLGNSCECSLGYEGDGRVCTVADLCQKGHGGCSKHANCSQVGTVVTCTCLPDYEGDGWSCRARDPCLDGHRGGCSEHADCLNTGPNTRRCECHVGYVGDGLQCLEELEPPVDRCLGGSSPCHTDALCTDLHFQEKQAGVFHIQATSGPYGLTFSEAKEACEGQGAVLASLPQLSAAQQLGFHVCFVGWLANGSAAHPVVTPAADCGNNRVGVVSLGVRKNLSELWDAYCYRVQDVACQCRAGFVGDGISTCNGKLLDVLAATANFSTFYGMLLGYANATQRGLEFMDFLEDELTYKTLFVPVNKGFVDNMTLSGPDLELHASNATFLSINASRGTLLPAHSGLSLFISDTGPDNTSLVPLAPGAVVVSHVIVWDIMAFNGIIHALASPLLMPPQTRAVLGSEPPPVALSLGVVVTSGTLLGLVAGALYLRARGKPPGFSFSAFQAEDNADDDFSPWQEGTSPTLVSVPNPVFGSSDIFCEPFDDSVLEEDFPDTQRVLKVK.

A signal peptide spans 1 to 25 (MAEPRTLLLLCVLVLCLSDSSFIRG). Over 26–2475 (QTVRSKRCDI…RAVLGSEPPP (2450 aa)) the chain is Extracellular. 4 EGF-like domains span residues 111–149 (FECP…SVCQ), 157–194 (FGPD…PHCD), 196–232 (ELPV…NVCL), and 233–272 (APDP…KVCL). 12 disulfides stabilise this stretch: Cys113–Cys127, Cys121–Cys137, Cys139–Cys148, Cys161–Cys172, Cys165–Cys182, Cys184–Cys193, Cys200–Cys211, Cys205–Cys218, Cys220–Cys231, Cys237–Cys248, Cys242–Cys258, and Cys260–Cys271. N-linked (GlcNAc...) asparagine glycans are attached at residues Asn134 and Asn142. N-linked (GlcNAc...) asparagine glycans are attached at residues Asn287, Asn313, Asn416, Asn607, Asn674, Asn713, and Asn746. FAS1 domains are found at residues 357–495 (YGHL…TALR) and 507–642 (KKTV…EGIL). The 41-residue stretch at 729 to 769 (DCTQCPGGFSNPCYGKGNCSDGVRGNGACLCFPDYKGIACH) folds into the EGF-like 5 domain. Intrachain disulfides connect Cys733–Cys747, Cys741–Cys757, and Cys759–Cys768. A glycan (N-linked (GlcNAc...) asparagine) is linked at Asn817. 4 EGF-like domains span residues 819 to 859 (SMGN…NGFS), 862 to 904 (RSNP…RICV), 905 to 947 (AIDE…YECS), and 948 to 987 (PIDP…DGFS). 10 cysteine pairs are disulfide-bonded: Cys823/Cys838, Cys832/Cys847, Cys866/Cys880, Cys874/Cys890, Cys892/Cys903, Cys909/Cys923, Cys917/Cys933, Cys935/Cys946, Cys952/Cys965, and Cys959/Cys975. FAS1 domains are found at residues 989 to 1119 (YGDI…SQVL) and 1129 to 1254 (GPGL…SGIL). 7 N-linked (GlcNAc...) asparagine glycosylation sites follow: Asn1011, Asn1088, Asn1097, Asn1171, Asn1179, Asn1223, and Asn1275. One can recognise a Laminin EGF-like 1 domain in the interval 1328–1393 (TLCEPCPGGL…CDCDHGLCQE (66 aa)). Intrachain disulfides connect Cys1333–Cys1347, Cys1341–Cys1357, Cys1359–Cys1368, Cys1380–Cys1391, Cys1384–Cys1401, Cys1403–Cys1412, Cys1421–Cys1431, Cys1425–Cys1441, Cys1443–Cys1454, Cys1460–Cys1473, Cys1467–Cys1483, Cys1485–Cys1496, Cys1502–Cys1515, Cys1509–Cys1525, Cys1527–Cys1539, Cys1545–Cys1558, Cys1552–Cys1568, and Cys1570–Cys1582. The N-linked (GlcNAc...) asparagine glycan is linked to Asn1398. EGF-like domains are found at residues 1417–1455 (TDHQ…SYCS), 1456–1497 (EVDP…ELCQ), 1498–1540 (EINS…QTCK), and 1541–1583 (LLDP…ITCH). N-linked (GlcNAc...) asparagine glycans are attached at residues Asn1450 and Asn1472. FAS1 domains lie at 1583–1709 (HGRV…DHVL) and 1725–1865 (PQRN…DQLL). N-linked (GlcNAc...) asparagine glycosylation is found at Asn1627 and Asn1728. A Laminin EGF-like 2 domain is found at 1966–2031 (INCHACPGGP…RCTQHGRCDE (66 aa)). Intrachain disulfides connect Cys1971–Cys1985, Cys1979–Cys1995, Cys1997–Cys2006, Cys2018–Cys2029, Cys2023–Cys2039, Cys2041–Cys2050, Cys2060–Cys2070, Cys2064–Cys2076, Cys2078–Cys2089, Cys2095–Cys2108, Cys2102–Cys2117, Cys2119–Cys2130, Cys2136–Cys2150, Cys2144–Cys2160, Cys2162–Cys2173, Cys2230–Cys2299, and Cys2254–Cys2275. EGF-like domains follow at residues 2056–2090 (LQPV…RVCT), 2091–2131 (VADL…WSCR), and 2132–2174 (ARDP…LQCL). A glycan (N-linked (GlcNAc...) asparagine) is linked at Asn2107. In terms of domain architecture, Link spans 2208–2301 (GVFHIQATSG…SELWDAYCYR (94 aa)). 8 N-linked (GlcNAc...) asparagine glycosylation sites follow: Asn2261, Asn2290, Asn2334, Asn2347, Asn2379, Asn2393, Asn2400, and Asn2424. The 138-residue stretch at 2322-2459 (NGKLLDVLAA…GIIHALASPL (138 aa)) folds into the FAS1 7 domain. The chain crosses the membrane as a helical span at residues 2476–2496 (VALSLGVVVTSGTLLGLVAGA). Residues 2497 to 2571 (LYLRARGKPP…PDTQRVLKVK (75 aa)) are Cytoplasmic-facing.

As to quaternary structure, interacts with CHID1.

The protein localises to the membrane. Functionally, acts as a scavenger receptor for acetylated low density lipoprotein. Binds to both Gram-positive and Gram-negative bacteria and may play a role in defense against bacterial infection. When inhibited in endothelial tube formation assays, there is a marked decrease in cell-cell interactions, suggesting a role in angiogenesis. Involved in the delivery of newly synthesized CHID1/SI-CLP from the biosynthetic compartment to the endosomal/lysosomal system. This is Stabilin-1 (Stab1) from Mus musculus (Mouse).